A 471-amino-acid chain; its full sequence is MAGEMTILGSAVLTLLLAGYLAQQYLPLPTPKVIGIDLGTTYCSVGVFFPGTGKVKVIPDENGHISIPSMVSFTDGDVYVGYESLELADSNPQNTIYDAKRFIGKIFTPEELEAEVGRYPFKVLHRNGMAEFSVTSNETIIVSPEFVGSRLLLKLKEMAEEYLGMPVANAVISVPAEFDLQQRNSTIQAANLAGLKILRVINEPTAAAMAYGLHKVDVFYVLVIDLGGGTLDVSLLNKQGGMFLTRAMSGNNKLGGQDFNQRLLQHLYKEIYQTYGFLPSRKEEIHRLRQAVEMVKLNLTIHQSAQVSVLLTVEGKDSKEPQNGDSELPKDQLTPGDGHHVNRVFRPGLSESKSGKSQVLFETEVSRKLFDALNEDLFQKILVPIQQVLKEGLLDKTEIDEVVLVGGSTRIPRIRQVIQEFFGKDPNTSVDPDLAVVTGVAIQAGIDGGSWPLQVSALEIPNKHLQKTNFN.

An N-terminal signal peptide occupies residues 1–22; it reads MAGEMTILGSAVLTLLLAGYLA. The span at 317 to 330 shows a compositional bias: basic and acidic residues; that stretch reads DSKEPQNGDSELPK. The segment at 317–350 is disordered; sequence DSKEPQNGDSELPKDQLTPGDGHHVNRVFRPGLS.

The protein belongs to the heat shock protein 70 family. Binds UBQLN2.

It localises to the microsome. The protein resides in the endoplasmic reticulum. Has peptide-independent ATPase activity. This Mus musculus (Mouse) protein is Heat shock 70 kDa protein 13 (Hspa13).